The chain runs to 706 residues: MKHIPLTTLCVAISAVLLTACGGSGGSNPPAPTPIPNASGSGNTGNTGNAGGTDNTANAGNTGGASSGTGSANTPEPKYQDVPTDKNEKEQVSPIQEPAMGYGMALSKINLHNRQDTPLDEKNIITLDGKKQVAEGKKSPLPFSLDVENKLLDGYIAKMDKADKNAIRRRIESENKAKPLSEAELAEKIKEAVRKSYEFQQVMTSLENKIFHSNDGTTKATTRDLQYVDYGYYLANDANYLTVKTDKPKLWNSGPVGGVFYNGSTTAKELPTQDAVKYKGHWDFMTDVANKGNRFSEVKGTRQAGWWYGASSKDEYNRLLTDEKNKPDGYNGEYGHSSEFTVNFKEKKLTGGLFSNLQDSHKQKVTKTKRYDIDANIHGNRFRGSAIASDKEKDSETKHPFTSDAKDRLEGGFYGPKGEELAGKFLTDDNKLFGVFGAKQESKADKTEAILDAYALGAFNKNDANTFTPFTKKQLDNFGNAKKLVLGSTVINLVSTDATKNEFTEDKPKSATNKAGETLMVNDKVSVKTYGYGRNFEYLKFGELSVGGSHSVFLQGERTATTGDKAVPTEGKAKYLGNWVGYITGTGTGKSFNEAQDIADFDIDFKNKTVNGKLTTKGRTDPVFNITGEISGNGWTGKASTAKADAGGYNIDSNGTNKSIVIRDADVTGGFYGPNATEMGGSFTHNTNDSKASVVFGTKRQEEVKP.

A signal peptide spans 1–20 (MKHIPLTTLCVAISAVLLTA). A lipid anchor (N-palmitoyl cysteine) is attached at cysteine 21. Cysteine 21 carries S-diacylglycerol cysteine lipidation. 2 disordered regions span residues 26–92 (GSNP…KEQV) and 384–412 (GSAIASDKEKDSETKHPFTSDAKDRLEGG). A compositionally biased stretch (gly residues) spans 42–51 (GNTGNTGNAG). Basic and acidic residues predominate over residues 389–410 (SDKEKDSETKHPFTSDAKDRLE).

Belongs to the TbpB family.

Its subcellular location is the cell outer membrane. It is found in the cell surface. Its function is as follows. Moraxella acquires iron by extracting it from serum transferrin (TF) in its human host. Acts as a transferrin receptor and is required for transferrin utilization. This Moraxella catarrhalis (Branhamella catarrhalis) protein is Transferrin-binding protein B.